Reading from the N-terminus, the 401-residue chain is L-rhamnonate dehydratase (401 aa).

Residues histidine 29 and arginine 55 each contribute to the substrate site. Residues aspartate 222, glutamate 248, and glutamate 276 each coordinate Mg(2+). Histidine 325 (proton acceptor) is an active-site residue. Residue glutamate 345 participates in substrate binding.

Belongs to the mandelate racemase/muconate lactonizing enzyme family. RhamD subfamily. Homooctamer; tetramer of dimers. It depends on Mg(2+) as a cofactor.

It catalyses the reaction L-rhamnonate = 2-dehydro-3-deoxy-L-rhamnonate + H2O. In terms of biological role, catalyzes the dehydration of L-rhamnonate to 2-keto-3-deoxy-L-rhamnonate (KDR). The chain is L-rhamnonate dehydratase from Escherichia coli O157:H7.